We begin with the raw amino-acid sequence, 230 residues long: Ion-translocating oxidoreductase complex subunit E (230 aa).

6 helical membrane-spanning segments follow: residues Ala18 to Ala38, Leu39 to Leu59, Thr63 to Val83, Leu86 to Val106, Trp125 to Leu145, and Pro182 to Val202.

It belongs to the NqrDE/RnfAE family. As to quaternary structure, the complex is composed of six subunits: RsxA, RsxB, RsxC, RsxD, RsxE and RsxG.

It localises to the cell inner membrane. Functionally, part of a membrane-bound complex that couples electron transfer with translocation of ions across the membrane. Required to maintain the reduced state of SoxR. In Salmonella newport (strain SL254), this protein is Ion-translocating oxidoreductase complex subunit E.